Consider the following 75-residue polypeptide: Conotoxin Vc6a (75 aa).

Positions 1 to 22 (MKLTCVVIVAVLFLTANTFATA) are cleaved as a signal peptide. The propeptide occupies 23–49 (DDPRNGLENLFLKAHHEMNPEASKLNE). Cystine bridges form between Cys51-Cys66, Cys58-Cys69, and Cys65-Cys74.

As to expression, expressed by the venom duct.

It localises to the secreted. The polypeptide is Conotoxin Vc6a (Conus victoriae (Queen Victoria cone)).